Consider the following 301-residue polypeptide: Heterogeneous nuclear ribonucleoprotein D-like (301 aa).

A disordered region spans residues 1-29 (MEDATEMSGGAEEFAEGSKINASKNQQDD). 2 consecutive RRM domains span residues 30-112 (GKMF…KGKE) and 115-194 (KKVF…QPKE). Disordered stretches follow at residues 194–230 (EVYR…NWNQ) and 269–301 (GYGP…YQPY). Positions 212 to 224 (GGRGGGRGRGRGQ) are enriched in gly residues.

Its subcellular location is the nucleus. The protein resides in the cytoplasm. In terms of biological role, acts as a transcriptional regulator. Binds DNA and RNA. This Gallus gallus (Chicken) protein is Heterogeneous nuclear ribonucleoprotein D-like (HNRNPDL).